Here is a 164-residue protein sequence, read N- to C-terminus: MEWILPIAGIIAAVAFLILVIGIVVVLLSVKKNLDHVAKTLDGVEGQVQGITRESTDLLHKANRLTEDIQDKSDRLNSVVDAVKGIGDSVQTLNGSVDRVTNSITHNISQNEDKISQVVQWSNVAMEVADKWQNRRNRRDSANYKTSSVANETNHSYTTRVDNK.

Residues 7 to 27 (IAGIIAAVAFLILVIGIVVVL) traverse the membrane as a helical segment. The disordered stretch occupies residues 136 to 164 (RNRRDSANYKTSSVANETNHSYTTRVDNK). Over residues 143 to 164 (NYKTSSVANETNHSYTTRVDNK) the composition is skewed to polar residues.

This sequence belongs to the UPF0478 family.

The protein localises to the cell membrane. In Staphylococcus saprophyticus subsp. saprophyticus (strain ATCC 15305 / DSM 20229 / NCIMB 8711 / NCTC 7292 / S-41), this protein is UPF0478 protein SSP1024.